The following is a 101-amino-acid chain: Small ribosomal subunit protein bS6 (101 aa).

The protein belongs to the bacterial ribosomal protein bS6 family.

In terms of biological role, binds together with bS18 to 16S ribosomal RNA. The protein is Small ribosomal subunit protein bS6 of Micrococcus luteus (strain ATCC 4698 / DSM 20030 / JCM 1464 / CCM 169 / CCUG 5858 / IAM 1056 / NBRC 3333 / NCIMB 9278 / NCTC 2665 / VKM Ac-2230) (Micrococcus lysodeikticus).